The following is a 292-amino-acid chain: Insulin-like growth factor-binding protein 3 (292 aa).

The N-terminal stretch at Met1–Ala27 is a signal peptide. Positions Pro36–Ala119 constitute an IGFBP N-terminal domain. 6 disulfide bridges follow: Cys40–Cys69, Cys43–Cys71, Cys51–Cys72, Cys60–Cys75, Cys83–Cys96, and Cys90–Cys116. Asn118, Asn124, and Asn137 each carry an N-linked (GlcNAc...) asparagine glycan. Disordered stretches follow at residues Ala127–Val161 and Tyr191–Tyr211. Residues Leu129–Thr139 are compositionally biased toward polar residues. Ser149 bears the Phosphoserine mark. Over residues Glu192 to Ser203 the composition is skewed to polar residues. N-linked (GlcNAc...) asparagine glycosylation is present at Asn200. Position 202 is a phosphoserine (Ser202). The region spanning Tyr211–Cys286 is the Thyroglobulin type-1 domain. Disulfide bonds link Cys214-Cys241, Cys252-Cys263, and Cys265-Cys286.

As to quaternary structure, interacts with XLKD1. Binds IGF2 more than IGF1. Forms a ternary complex of about 140 to 150 kDa with IGF1 or IGF2 and a 85 kDa glycoprotein (ALS). Interacts with humanin; humanin competes with importin KPNB1 for binding to IGFBP3, blocking IGFBP3 nuclear import and IGFBP3-mediated apoptosis. Interacts with TMEM219. Interacts with RXRA; this interaction modulates the transcriptional activity of RXRA. Interacts with LRP1; this interaction mediates cell growth inhibition independent of IGF1. In terms of processing, phosphorylated by FAM20C in the extracellular medium. Phosphorylated by CK2; resulting in decreased nuclear localization.

The protein resides in the secreted. Its subcellular location is the nucleus. Functionally, multifunctional protein that plays a critical role in regulating the availability of IGFs such as IGF1 and IGF2 to their receptors and thereby regulates IGF-mediated cellular processes including proliferation, differentiation, and apoptosis in a cell-type specific manner. Also exhibits IGF-independent antiproliferative and apoptotic effects mediated by its receptor TMEM219/IGFBP-3R. Inhibits the positive effect of humanin on insulin sensitivity. Promotes testicular germ cell apoptosis. Acts via LRP-1/alpha2M receptor, also known as TGF-beta type V receptor, to mediate cell growth inhibition independent of IGF1. Mechanistically, induces serine-specific dephosphorylation of IRS1 or IRS2 upon ligation to its receptor, leading to the inhibitory cascade. In the nucleus, interacts with transcription factors such as retinoid X receptor-alpha/RXRA to regulate transcriptional signaling and apoptosis. The protein is Insulin-like growth factor-binding protein 3 (Igfbp3) of Rattus norvegicus (Rat).